A 522-amino-acid polypeptide reads, in one-letter code: MGRDKEDKTEMDSVVPWMRAPVDVSNVENCALDTLPCLNPKLKKALENMGISSLFPVQVAVWHETIGPGGFERDICVNSPTGSGKTLSYALPIVQLLASRPVRCLRALVVLPTRDLALQVKDVFDAIAPAVGLSVGSAVGQSSIAGEISQLIKTPKLDAGICYDPDDLSQNLESAVDILVATPGRLMDHINNTKGFTLEHLRYLVVDETDRLLREAYQSWLPTVLQLTQTSDDSLFPSFTPFVPSAFGSLQTVRRQSVERGFKGKPYPRLVKMVLSATLTQDPSKLIQLDLHHPLFMTTGGSRYRLPEKLECLRLICETGMKPVYLVALLKSWEGEKCIIFTSSVETTRRLCKLLNFFGDPKIKAKEYSGGLNQSLRSKELKAFRKGDIQVLVASDALTRGMDVKGVTNVINYDMPPFAKTFIHRAGRTARAGQAGRCFTLLSNHEVRRFSKLLEKVGSDSCPIYPIPPTSLDSIRATYTPALEKLKELVESEAPKKGRQAFRHNSRTGNSQTKLNKPRSEA.

Positions 30–59 match the Q motif motif; sequence CALDTLPCLNPKLKKALENMGISSLFPVQV. Residues 66–297 enclose the Helicase ATP-binding domain; it reads IGPGGFERDI…QLDLHHPLFM (232 aa). 79-86 is an ATP binding site; sequence SPTGSGKT. The short motif at 207–210 is the DEAD box element; it reads DETD. The Helicase C-terminal domain occupies 325-475; it reads YLVALLKSWE…PIPPTSLDSI (151 aa). The interval 490–522 is disordered; it reads VESEAPKKGRQAFRHNSRTGNSQTKLNKPRSEA. The span at 497-506 shows a compositional bias: basic residues; it reads KGRQAFRHNS.

The protein belongs to the DEAD box helicase family. DDX51/DBP6 subfamily.

It carries out the reaction ATP + H2O = ADP + phosphate + H(+). This chain is DEAD-box ATP-dependent RNA helicase 1 (RH1), found in Arabidopsis thaliana (Mouse-ear cress).